The sequence spans 288 residues: ATP synthase gamma chain (288 aa).

The protein belongs to the ATPase gamma chain family. In terms of assembly, F-type ATPases have 2 components, CF(1) - the catalytic core - and CF(0) - the membrane proton channel. CF(1) has five subunits: alpha(3), beta(3), gamma(1), delta(1), epsilon(1). CF(0) has three main subunits: a, b and c.

It is found in the cell inner membrane. Functionally, produces ATP from ADP in the presence of a proton gradient across the membrane. The gamma chain is believed to be important in regulating ATPase activity and the flow of protons through the CF(0) complex. This is ATP synthase gamma chain from Vibrio parahaemolyticus serotype O3:K6 (strain RIMD 2210633).